Reading from the N-terminus, the 45-residue chain is EVDRYWVVLAALEALADRGDIEAKVVAEAIAKFGIDPDKRNPLDC.

As to quaternary structure, homodimer. The cofactor is thiamine diphosphate.

It carries out the reaction N(6)-[(R)-lipoyl]-L-lysyl-[protein] + pyruvate + H(+) = N(6)-[(R)-S(8)-acetyldihydrolipoyl]-L-lysyl-[protein] + CO2. Functionally, the pyruvate dehydrogenase complex catalyzes the overall conversion of pyruvate to acetyl-CoA and CO(2). It contains multiple copies of three enzymatic components: pyruvate dehydrogenase (E1), dihydrolipoamide acetyltransferase (E2) and lipoamide dehydrogenase (E3). The polypeptide is Pyruvate dehydrogenase E1 component (Azotobacter vinelandii).